Reading from the N-terminus, the 503-residue chain is Na(+)-translocating NADH-quinone reductase subunit B (503 aa).

3 helical membrane-spanning segments follow: residues 55 to 75 (MMLVVIALMPTIFAAVWNSGL), 120 to 142 (IFLPLLFISYAVGGTCEVLFAII), and 160 to 180 (LILPPTIPYWMAALGIAFGVV). Thr-248 carries the post-translational modification FMN phosphoryl threonine. The next 5 helical transmembrane spans lie at 361 to 381 (TSTVACLLGAGLLLLTGIASW), 384 to 404 (MLSFGLSAFFFAWFFKIMSIL), 417 to 437 (FFIPAYRHLCIGGLAFGLVFM), 452 to 472 (WLYGAFIGFLTILIRLINPAY), and 475 to 495 (GVMLAILLGNVFAPLFDNIAL).

It belongs to the NqrB/RnfD family. Composed of six subunits; NqrA, NqrB, NqrC, NqrD, NqrE and NqrF. It depends on FMN as a cofactor.

The protein resides in the cell inner membrane. It carries out the reaction a ubiquinone + n Na(+)(in) + NADH + H(+) = a ubiquinol + n Na(+)(out) + NAD(+). NQR complex catalyzes the reduction of ubiquinone-1 to ubiquinol by two successive reactions, coupled with the transport of Na(+) ions from the cytoplasm to the periplasm. NqrA to NqrE are probably involved in the second step, the conversion of ubisemiquinone to ubiquinol. The chain is Na(+)-translocating NADH-quinone reductase subunit B from Chlamydia trachomatis serovar A (strain ATCC VR-571B / DSM 19440 / HAR-13).